The chain runs to 208 residues: FMN-dependent NADH:quinone oxidoreductase (208 aa).

FMN is bound by residues 17–19 (SNS), 99–102 (MWNL), and 143–146 (SRGG).

The protein belongs to the azoreductase type 1 family. As to quaternary structure, homodimer. Requires FMN as cofactor.

It carries out the reaction 2 a quinone + NADH + H(+) = 2 a 1,4-benzosemiquinone + NAD(+). It catalyses the reaction N,N-dimethyl-1,4-phenylenediamine + anthranilate + 2 NAD(+) = 2-(4-dimethylaminophenyl)diazenylbenzoate + 2 NADH + 2 H(+). Functionally, quinone reductase that provides resistance to thiol-specific stress caused by electrophilic quinones. In terms of biological role, also exhibits azoreductase activity. Catalyzes the reductive cleavage of the azo bond in aromatic azo compounds to the corresponding amines. This chain is FMN-dependent NADH:quinone oxidoreductase, found in Staphylococcus aureus (strain bovine RF122 / ET3-1).